The following is a 452-amino-acid chain: Chromosomal replication initiator protein DnaA (452 aa).

The domain I, interacts with DnaA modulators stretch occupies residues 1–72; sequence MPDMLTLWTD…LVEYAYQAAH (72 aa). The tract at residues 72–114 is domain II; sequence HEDIQPVLILENERQQQATLKAKTAPVAAGEPVEPTPTFMKET. Positions 115–331 are domain III, AAA+ region; the sequence is ALNSRYTFDT…GALARVQAYS (217 aa). ATP contacts are provided by G159, G161, K162, and T163. Residues 332–452 are domain IV, binds dsDNA; that stretch reads QLMHQPIATD…IDSLKDDLRR (121 aa).

This sequence belongs to the DnaA family. As to quaternary structure, oligomerizes as a right-handed, spiral filament on DNA at oriC.

The protein localises to the cytoplasm. In terms of biological role, plays an essential role in the initiation and regulation of chromosomal replication. ATP-DnaA binds to the origin of replication (oriC) to initiate formation of the DNA replication initiation complex once per cell cycle. Binds the DnaA box (a 9 base pair repeat at the origin) and separates the double-stranded (ds)DNA. Forms a right-handed helical filament on oriC DNA; dsDNA binds to the exterior of the filament while single-stranded (ss)DNA is stabiized in the filament's interior. The ATP-DnaA-oriC complex binds and stabilizes one strand of the AT-rich DNA unwinding element (DUE), permitting loading of DNA polymerase. After initiation quickly degrades to an ADP-DnaA complex that is not apt for DNA replication. Binds acidic phospholipids. This is Chromosomal replication initiator protein DnaA from Levilactobacillus brevis (strain ATCC 367 / BCRC 12310 / CIP 105137 / JCM 1170 / LMG 11437 / NCIMB 947 / NCTC 947) (Lactobacillus brevis).